The sequence spans 99 residues: Integration host factor subunit alpha (99 aa).

This sequence belongs to the bacterial histone-like protein family. In terms of assembly, heterodimer of an alpha and a beta chain.

This protein is one of the two subunits of integration host factor, a specific DNA-binding protein that functions in genetic recombination as well as in transcriptional and translational control. In Psychrobacter cryohalolentis (strain ATCC BAA-1226 / DSM 17306 / VKM B-2378 / K5), this protein is Integration host factor subunit alpha.